A 76-amino-acid polypeptide reads, in one-letter code: Kappa-actitoxin-Avd4g (76 aa).

The signal sequence occupies residues 1–19 (MNKALFLCLVVLCAAVVFA). The propeptide occupies 20–31 (AEDLQKAKHAPF). Cystine bridges form between C37/C72, C39/C65, and C55/C73.

It belongs to the sea anemone type 3 (BDS) potassium channel toxin family. As to expression, moderately expressed in the ectodermal tissue from the distal and proximal tentacles, body wall, and oral disk.

It is found in the secreted. It localises to the nematocyst. In terms of biological role, blocks Kv3 voltage-gated potassium channels. Reduces blood pressure. This chain is Kappa-actitoxin-Avd4g, found in Anemonia viridis (Snakelocks anemone).